We begin with the raw amino-acid sequence, 350 residues long: GTPase Obg (350 aa).

The Obg domain maps to 1–158; that stretch reads MFIDSVKITL…RLVRLELKLI (158 aa). One can recognise an OBG-type G domain in the interval 159 to 339; the sequence is ADVGLVGFPN…LKFMLLEEIK (181 aa). Residues 165–172, 190–194, 212–215, 280–283, and 320–322 each bind GTP; these read GFPNVGKS, FTTLT, DIPG, SKSD, and SSL. Serine 172 and threonine 192 together coordinate Mg(2+).

It belongs to the TRAFAC class OBG-HflX-like GTPase superfamily. OBG GTPase family. Monomer. Mg(2+) is required as a cofactor.

Its subcellular location is the cytoplasm. Functionally, an essential GTPase which binds GTP, GDP and possibly (p)ppGpp with moderate affinity, with high nucleotide exchange rates and a fairly low GTP hydrolysis rate. Plays a role in control of the cell cycle, stress response, ribosome biogenesis and in those bacteria that undergo differentiation, in morphogenesis control. The sequence is that of GTPase Obg from Campylobacter jejuni subsp. jejuni serotype O:2 (strain ATCC 700819 / NCTC 11168).